Reading from the N-terminus, the 360-residue chain is N6-Methyl-AMP deaminase (360 aa).

2 residues coordinate Zn(2+): H23 and H25. N(6)-methyl-AMP is bound by residues H25, N27, H73, 105-108 (STPR), D147, and G180. Position 207 (H207) interacts with Zn(2+). N(6)-methyl-AMP contacts are provided by E210, D292, and D293. The active-site Proton donor is the E210. A Zn(2+)-binding site is contributed by D292.

This sequence belongs to the metallo-dependent hydrolases superfamily. Adenosine and AMP deaminases family. In terms of assembly, monomer. It depends on Zn(2+) as a cofactor.

It catalyses the reaction N(6)-methyl-AMP + H2O + H(+) = IMP + methylamine. Functionally, catalyzes the hydrolysis of the free cytosolic methylated adenosine nucleotide N(6)-methyl-AMP (N6-mAMP) to produce inositol monophosphate (IMP) and methylamine. Is required for the catabolism of cytosolic N6-mAMP, which is derived from the degradation of mRNA containing N6-methylated adenine (m6A). The sequence is that of N6-Methyl-AMP deaminase (Mapda) from Mus musculus (Mouse).